A 297-amino-acid chain; its full sequence is Homoserine kinase (297 aa).

82–92 (PLTRGLGSSAS) contributes to the ATP binding site.

Belongs to the GHMP kinase family. Homoserine kinase subfamily.

It localises to the cytoplasm. It catalyses the reaction L-homoserine + ATP = O-phospho-L-homoserine + ADP + H(+). Its pathway is amino-acid biosynthesis; L-threonine biosynthesis; L-threonine from L-aspartate: step 4/5. Functionally, catalyzes the ATP-dependent phosphorylation of L-homoserine to L-homoserine phosphate. This chain is Homoserine kinase, found in Bacillus cereus (strain ATCC 14579 / DSM 31 / CCUG 7414 / JCM 2152 / NBRC 15305 / NCIMB 9373 / NCTC 2599 / NRRL B-3711).